A 146-amino-acid polypeptide reads, in one-letter code: VHFTAEEKSVITGLWGKVNVEETGGEAVGRLLVVYPWTQRFFDSFGNMSSPSAIMGNPKVKAHGKKVLTSFGDAVKNMDNLKGTFAKLSELHCDKLHVDPENFRLLGNMIVIILASHFGGEFTPEVQAAWQKLVAGVATALAHKYH.

The Globin domain maps to 2–146 (HFTAEEKSVI…VATALAHKYH (145 aa)). Positions 63 and 92 each coordinate heme b.

It belongs to the globin family.

The sequence is that of Hemoglobin subunit theta from Sus scrofa (Pig).